The following is a 352-amino-acid chain: S-adenosylmethionine:tRNA ribosyltransferase-isomerase (352 aa).

Belongs to the QueA family. Monomer.

It localises to the cytoplasm. It catalyses the reaction 7-aminomethyl-7-carbaguanosine(34) in tRNA + S-adenosyl-L-methionine = epoxyqueuosine(34) in tRNA + adenine + L-methionine + 2 H(+). It participates in tRNA modification; tRNA-queuosine biosynthesis. In terms of biological role, transfers and isomerizes the ribose moiety from AdoMet to the 7-aminomethyl group of 7-deazaguanine (preQ1-tRNA) to give epoxyqueuosine (oQ-tRNA). The polypeptide is S-adenosylmethionine:tRNA ribosyltransferase-isomerase (Gloeobacter violaceus (strain ATCC 29082 / PCC 7421)).